A 700-amino-acid polypeptide reads, in one-letter code: MTNQNRRDFLRLAAGTAGAAALQLFPPVIREALAIPANRRTGTIRDVEHIVILMQENRSFDHYFGKLRGVRGFGDPRPLALQNGKSVFHQPVLLGPAELLPFHPDASNLGMQFLQDLPHGWQDMHGAWNKGRYDRWIANKGTTTMAYLERDDIPFHYQLADAFTICDAYHCSIPSSTDPNRYYMWTGYVGNDGAGGGPVLGNEEAGYGWSTYPETLEQAGVSWKIYQDIGTGLDAAGSWGWTQNPYIGNYGDNSLLYFNQYRNAQPGSPLYDKARTGTNVSAGGTLFDVLQQDVKNGTLPQVSWICAPEAYSEHPNWPANYGAWYVEQVLKALTSNPDVWSKTALFITYDENDGFFDHVAPPFAPQSRENGLSTVSTAGEIFAGDATHMAGPYGLGPRVPMLVVSPWTKGGWVCSQTFDHTSLLQFIEARFNDRYSVRAPNVTPWRRAVCGDLTSAFNFSSPDGSWPQLPDTSGYAPPDRNRHPSYVPVPPAAQSMPKQEAGLRAARALPYELFVLGRIDQSTGKFKLTFANTGRAGAAFQVTAGNRLDGPWAYTVEARKRLSDEWSTALTLSIYDLTVYGPNGFLCQFRGSTAAALGLSANPEVIYGYDVANGNITLRLSNRGRAAVRLTVTNAYGNAAPRVYELKPGQRINDYWDLRDSHSWYDLSVSDGAPNGFLRRFAGHVETGRPSTSDPLIATA.

Residues 1–34 constitute a signal peptide (tat-type signal); that stretch reads MTNQNRRDFLRLAAGTAGAAALQLFPPVIREALA.

Belongs to the bacterial phospholipase C family. Predicted to be exported by the Tat system. The position of the signal peptide cleavage has not been experimentally proven.

It carries out the reaction a 1,2-diacyl-sn-glycero-3-phosphocholine + H2O = phosphocholine + a 1,2-diacyl-sn-glycerol + H(+). Functionally, hydrolyzes phosphatidylserine as well as phosphatidylcholine. This chain is Non-hemolytic phospholipase C (plcN), found in Burkholderia pseudomallei (strain K96243).